The chain runs to 635 residues: 5-aminolevulinate synthase, non-specific, mitochondrial (635 aa).

The transit peptide at 1-56 (MEAVVRRCPFLARVSQAFLQKAGPSLLFYAQHCPKMMEAAPPAAARGLATSASRGQ) directs the protein to the mitochondrion. The segment covering 44–66 (AARGLATSASRGQQVEETPAAQP) has biased composition (low complexity). The tract at residues 44-94 (AARGLATSASRGQQVEETPAAQPEAKKAKEVAQQNTDGSQPPAGHPPAAAV) is disordered. Substrate-binding residues include Arg212, Ser329, and Lys348. Pyridoxal 5'-phosphate contacts are provided by Ser381, His409, and Thr437. Lys440 is an active-site residue. At Lys440 the chain carries N6-(pyridoxal phosphate)lysine. Pyridoxal 5'-phosphate is bound by residues Thr469 and Thr470. A substrate-binding site is contributed by Thr557.

Belongs to the class-II pyridoxal-phosphate-dependent aminotransferase family. As to quaternary structure, homodimer. Requires pyridoxal 5'-phosphate as cofactor. As to expression, ubiquitous.

It localises to the mitochondrion inner membrane. It catalyses the reaction succinyl-CoA + glycine + H(+) = 5-aminolevulinate + CO2 + CoA. Its pathway is porphyrin-containing compound metabolism; protoporphyrin-IX biosynthesis; 5-aminolevulinate from glycine: step 1/1. Functionally, catalyzes the pyridoxal 5'-phosphate (PLP)-dependent condensation of succinyl-CoA and glycine to form aminolevulinic acid (ALA), with CoA and CO2 as by-products. This chain is 5-aminolevulinate synthase, non-specific, mitochondrial (ALAS1), found in Gallus gallus (Chicken).